The primary structure comprises 317 residues: L-lactate dehydrogenase (317 aa).

Residues Val-16, Asp-37, and Tyr-68 each contribute to the NAD(+) site. Substrate is bound by residues Gln-85, Arg-91, 123–126, and 151–154; these read NPCD and DSAR. 121 to 123 serves as a coordination point for NAD(+); the sequence is ASN. The Proton acceptor role is filled by His-178. Tyr-222 bears the Phosphotyrosine mark. Thr-231 is a substrate binding site.

It belongs to the LDH/MDH superfamily. LDH family. Homotetramer.

Its subcellular location is the cytoplasm. It carries out the reaction (S)-lactate + NAD(+) = pyruvate + NADH + H(+). It participates in fermentation; pyruvate fermentation to lactate; (S)-lactate from pyruvate: step 1/1. Its function is as follows. Catalyzes the conversion of lactate to pyruvate. The polypeptide is L-lactate dehydrogenase (Mesoplasma florum (strain ATCC 33453 / NBRC 100688 / NCTC 11704 / L1) (Acholeplasma florum)).